We begin with the raw amino-acid sequence, 128 residues long: Cytochrome c-type biogenesis protein CcmE (128 aa).

Topologically, residues 1–8 are cytoplasmic; sequence MQKRVRNR. Residues 9–29 traverse the membrane as a helical; Signal-anchor for type II membrane protein segment; that stretch reads LITIIICFCSACLGISIILYN. Over 30 to 128 the chain is Periplasmic; that stretch reads LEKNIVFFLP…KHDENYRPPQ (99 aa). 2 residues coordinate heme: His120 and Tyr124.

The protein belongs to the CcmE/CycJ family.

Its subcellular location is the cell inner membrane. Its function is as follows. Heme chaperone required for the biogenesis of c-type cytochromes. Transiently binds heme delivered by CcmC and transfers the heme to apo-cytochromes in a process facilitated by CcmF and CcmH. In Rickettsia peacockii (strain Rustic), this protein is Cytochrome c-type biogenesis protein CcmE.